We begin with the raw amino-acid sequence, 182 residues long: Isopentenyl-diphosphate Delta-isomerase (182 aa).

Residues His-25 and His-32 each contribute to the Mn(2+) site. The Nudix hydrolase domain occupies 30 to 164; the sequence is LLHLAFSSWL…PWAFSPWMVM (135 aa). Residue Cys-67 is part of the active site. His-69 lines the Mn(2+) pocket. Position 87 (Glu-87) interacts with Mg(2+). Positions 114 and 116 each coordinate Mn(2+). Glu-116 is an active-site residue.

Belongs to the IPP isomerase type 1 family. As to quaternary structure, homodimer. The cofactor is Mg(2+). It depends on Mn(2+) as a cofactor.

Its subcellular location is the cytoplasm. The enzyme catalyses isopentenyl diphosphate = dimethylallyl diphosphate. The protein operates within isoprenoid biosynthesis; dimethylallyl diphosphate biosynthesis; dimethylallyl diphosphate from isopentenyl diphosphate: step 1/1. In terms of biological role, catalyzes the 1,3-allylic rearrangement of the homoallylic substrate isopentenyl (IPP) to its highly electrophilic allylic isomer, dimethylallyl diphosphate (DMAPP). The protein is Isopentenyl-diphosphate Delta-isomerase of Escherichia coli (strain ATCC 8739 / DSM 1576 / NBRC 3972 / NCIMB 8545 / WDCM 00012 / Crooks).